The chain runs to 156 residues: Probable cyclic pyranopterin monophosphate synthase (156 aa).

Substrate-binding positions include 73 to 75 (MCH) and 109 to 110 (ME). Asp124 is a catalytic residue.

This sequence belongs to the MoaC family. Homohexamer; trimer of dimers.

The catalysed reaction is (8S)-3',8-cyclo-7,8-dihydroguanosine 5'-triphosphate = cyclic pyranopterin phosphate + diphosphate. The protein operates within cofactor biosynthesis; molybdopterin biosynthesis. Catalyzes the conversion of (8S)-3',8-cyclo-7,8-dihydroguanosine 5'-triphosphate to cyclic pyranopterin monophosphate (cPMP). The polypeptide is Probable cyclic pyranopterin monophosphate synthase (Archaeoglobus fulgidus (strain ATCC 49558 / DSM 4304 / JCM 9628 / NBRC 100126 / VC-16)).